Consider the following 60-residue polypeptide: MSQFDTNKLNEIDINKVSLSEVISRPNPNKQVVELNRTSLYWGLLLIFVLAVLFSSYIFN.

A helical membrane pass occupies residues 39 to 59 (SLYWGLLLIFVLAVLFSSYIF).

It belongs to the PsbL family. PSII is composed of 1 copy each of membrane proteins PsbA, PsbB, PsbC, PsbD, PsbE, PsbF, PsbH, PsbI, PsbJ, PsbK, PsbL, PsbM, PsbT, PsbX, PsbY, PsbZ, Psb30/Ycf12, at least 3 peripheral proteins of the oxygen-evolving complex and a large number of cofactors. It forms dimeric complexes.

It is found in the plastid. Its subcellular location is the chloroplast thylakoid membrane. Functionally, one of the components of the core complex of photosystem II (PSII). PSII is a light-driven water:plastoquinone oxidoreductase that uses light energy to abstract electrons from H(2)O, generating O(2) and a proton gradient subsequently used for ATP formation. It consists of a core antenna complex that captures photons, and an electron transfer chain that converts photonic excitation into a charge separation. This subunit is found at the monomer-monomer interface and is required for correct PSII assembly and/or dimerization. This Oedogonium cardiacum (Filamentous green alga) protein is Photosystem II reaction center protein L.